The chain runs to 127 residues: MPTINQLVRKERKKVIVKSKSPALKECPQRRGVCTRVYTTTPKKPNSALRKVAKVRLTSGFEVISYIGGEGHNLQEHSIVLVRGGRVKDLPGVKYHIVRGALDTAGVAKRTVSRSKYGAKRPKDAKK.

3-methylthioaspartic acid is present on aspartate 89.

Belongs to the universal ribosomal protein uS12 family. In terms of assembly, part of the 30S ribosomal subunit. Contacts proteins S8 and S17. May interact with IF1 in the 30S initiation complex.

Its function is as follows. With S4 and S5 plays an important role in translational accuracy. Interacts with and stabilizes bases of the 16S rRNA that are involved in tRNA selection in the A site and with the mRNA backbone. Located at the interface of the 30S and 50S subunits, it traverses the body of the 30S subunit contacting proteins on the other side and probably holding the rRNA structure together. The combined cluster of proteins S8, S12 and S17 appears to hold together the shoulder and platform of the 30S subunit. This Campylobacter fetus subsp. fetus (strain 82-40) protein is Small ribosomal subunit protein uS12.